A 410-amino-acid chain; its full sequence is MKIYLVGGAVRDALLEQPAGDRDWVVVGADQAQMEAQGFKPVGKDFPVFLHPRSGEEYALARTERKSGRGYRGFVVDADPSVTLEEDLLRRDFTINAIARDEDTGQLFDPYNGVRDLQARVLRHVGPAFIEDPVRVLRAARFMARLAPLGFSLAAETAALMRDMAAGGELDSLVPERVWQELRRALSCAQPSAFLRTLHDADALRVILPEVDALYGVPQRADFHPEVDTGIHQEMVSDIAARLAPGDALVGFAALTHDLGKALTPQAQWPRHVMHEQRGVAPLQALCERLKVPQDFRQLAIIACREHLNVHRLAELRDRTLHELLVRCDAFRRPERIAQLALVCEADKRGRLGSEEAAYPQGEALKRLHAAALAINARDLAAEGLQGPQIGEALTKARIAAIAAARNTGA.

ATP contacts are provided by Gly-8 and Arg-11. CTP contacts are provided by Gly-8 and Arg-11. Residues Asp-21 and Asp-23 each contribute to the Mg(2+) site. The ATP site is built by Arg-91, Arg-138, and Arg-141. CTP contacts are provided by Arg-91, Arg-138, and Arg-141. Residues 229-347 form the HD domain; it reads TGIHQEMVSD…AQLALVCEAD (119 aa).

This sequence belongs to the tRNA nucleotidyltransferase/poly(A) polymerase family. Bacterial CCA-adding enzyme type 1 subfamily. In terms of assembly, monomer. Can also form homodimers and oligomers. The cofactor is Mg(2+). It depends on Ni(2+) as a cofactor.

It carries out the reaction a tRNA precursor + 2 CTP + ATP = a tRNA with a 3' CCA end + 3 diphosphate. The enzyme catalyses a tRNA with a 3' CCA end + 2 CTP + ATP = a tRNA with a 3' CCACCA end + 3 diphosphate. Catalyzes the addition and repair of the essential 3'-terminal CCA sequence in tRNAs without using a nucleic acid template. Adds these three nucleotides in the order of C, C, and A to the tRNA nucleotide-73, using CTP and ATP as substrates and producing inorganic pyrophosphate. tRNA 3'-terminal CCA addition is required both for tRNA processing and repair. Also involved in tRNA surveillance by mediating tandem CCA addition to generate a CCACCA at the 3' terminus of unstable tRNAs. While stable tRNAs receive only 3'-terminal CCA, unstable tRNAs are marked with CCACCA and rapidly degraded. This chain is Multifunctional CCA protein, found in Xanthomonas axonopodis pv. citri (strain 306).